Reading from the N-terminus, the 438-residue chain is V-type ATP synthase beta chain (438 aa).

Belongs to the ATPase alpha/beta chains family.

Functionally, produces ATP from ADP in the presence of a proton gradient across the membrane. The V-type beta chain is a regulatory subunit. The chain is V-type ATP synthase beta chain from Protochlamydia amoebophila (strain UWE25).